The following is a 237-amino-acid chain: Type III pantothenate kinase (237 aa).

Position 6–13 (6–13 (DAGNSRVK)) interacts with ATP. Residues Y86 and 93–96 (GADR) contribute to the substrate site. The active-site Proton acceptor is D95. Residue T118 coordinates ATP. T168 lines the substrate pocket.

This sequence belongs to the type III pantothenate kinase family. Homodimer. NH4(+) serves as cofactor. Requires K(+) as cofactor.

It localises to the cytoplasm. The catalysed reaction is (R)-pantothenate + ATP = (R)-4'-phosphopantothenate + ADP + H(+). Its pathway is cofactor biosynthesis; coenzyme A biosynthesis; CoA from (R)-pantothenate: step 1/5. Functionally, catalyzes the phosphorylation of pantothenate (Pan), the first step in CoA biosynthesis. In Chromobacterium violaceum (strain ATCC 12472 / DSM 30191 / JCM 1249 / CCUG 213 / NBRC 12614 / NCIMB 9131 / NCTC 9757 / MK), this protein is Type III pantothenate kinase.